Reading from the N-terminus, the 366-residue chain is Arfaptin-1 (366 aa).

A disordered region spans residues 1 to 78; it reads MAEESPKNSA…SSAPPLPCVL (78 aa). A2 is modified (N-acetylalanine). At S5 the chain carries Phosphoserine. The span at 22–35 shows a compositional bias: basic and acidic residues; sequence GDAHEHGYNRDLKH. Phosphoserine is present on residues S36 and S39. Over residues 44 to 53 the composition is skewed to polar residues; the sequence is SETQITSHGF. Phosphoserine is present on residues S69, S79, and S125. The AH domain occupies 146 to 346; that stretch reads TVDLELEAQI…NQKQLEQTLK (201 aa). T354 bears the Phosphothreonine mark.

Forms homodimers or heterodimers with ARFIP2. Interacts with non-myristoylated GTP-bound ARF3, but not to GDP-bound ARF3. Interacts with ARF1. Binds with lower affinity to ARF5 and with very little affinity to ARF6. Interacts with ARL1. Interacts with ATG9A.

It is found in the golgi apparatus. The protein localises to the trans-Golgi network membrane. Functionally, plays a role in controlling biogenesis of secretory granules at the trans-Golgi network. Mechanistically, binds ARF-GTP at the neck of a growing secretory granule precursor and forms a protective scaffold. Once the granule precursor has been completely loaded, active PRKD1 phosphorylates ARFIP1 and releases it from ARFs. In turn, ARFs induce fission. Through this mechanism, ensures proper secretory granule formation at the Golgi of pancreatic beta cells. In Rattus norvegicus (Rat), this protein is Arfaptin-1.